A 317-amino-acid polypeptide reads, in one-letter code: Melanocyte-stimulating hormone receptor (317 aa).

Residues 1-37 (MAVQGSQRRLLGSLNSTPTAIPQLGLAANQTGARCLE) lie on the Extracellular side of the membrane. Asparagine 29 carries an N-linked (GlcNAc...) asparagine glycan. A helical transmembrane segment spans residues 38–63 (VSISDGLFLSLGLVSLVENALVVATI). Residues 64–72 (AKNRNLHSP) are Cytoplasmic-facing. Residues 73-93 (MYCFICCLALSDLLVSGSNVL) traverse the membrane as a helical segment. Residues 94–118 (ETAVILLLEAGALVARAAVLQQLDN) lie on the Extracellular side of the membrane. Residues 119–140 (VIDVITCSSMLSSLCFLGAIAV) form a helical membrane-spanning segment. Residues 141-163 (DRYISIFYALRYHSIVTLPRARR) are Cytoplasmic-facing. A helical membrane pass occupies residues 164 to 183 (AVAAIWVASVVFSTLFIAYY). At 184–191 (DHVAVLLC) the chain is on the extracellular side. The helical transmembrane segment at 192-211 (LVVFFLAMLVLMAVLYVHML) threads the bilayer. The Cytoplasmic portion of the chain corresponds to 212–240 (ARACQHAQGIARLHKRQRPVHQGFGLKGA). Residues 241–266 (VTLTILLGIFFLCWGPFFLHLTLIVL) traverse the membrane as a helical segment. The Extracellular portion of the chain corresponds to 267 to 279 (CPEHPTCGCIFKN). Residues 280-300 (FNLFLALIICNAIIDPLIYAF) traverse the membrane as a helical segment. At 301–317 (HSQELRRTLKEVLTCSW) the chain is on the cytoplasmic side. A lipid anchor (S-palmitoyl cysteine) is attached at cysteine 315.

Belongs to the G-protein coupled receptor 1 family. Interacts with MGRN1, but does not undergo MGRN1-mediated ubiquitination; this interaction competes with GNAS-binding and thus inhibits agonist-induced cAMP production. Interacts with OPN3; the interaction results in a decrease in MC1R-mediated cAMP signaling and ultimately a decrease in melanin production in melanocytes. As to expression, expressed in melanocytes. Expressed in corticoadrenal tissue.

The protein resides in the cell membrane. In terms of biological role, receptor for MSH (alpha, beta and gamma) and ACTH. The activity of this receptor is mediated by G proteins which activate adenylate cyclase. Mediates melanogenesis, the production of eumelanin (black/brown) and phaeomelanin (red/yellow), via regulation of cAMP signaling in melanocytes. In Homo sapiens (Human), this protein is Melanocyte-stimulating hormone receptor (MC1R).